The primary structure comprises 198 residues: Nudix hydrolase 21, chloroplastic (198 aa).

A chloroplast-targeting transit peptide spans 1–37; sequence MISLFISNFSNLSNLSPTFDNMNMNIPSKKIVPVPTP. Positions 59–191 constitute a Nudix hydrolase domain; the sequence is GYRQVVGCVP…WMREALEAFI (133 aa). The short motif at 98–119 is the Nudix box element; sequence GGWEIDESIEEAALRETIEEAG. 2 residues coordinate Mg(2+): Glu-113 and Glu-117.

Belongs to the Nudix hydrolase family. Mg(2+) is required as a cofactor. The cofactor is Mn(2+). Expressed in roots, leaves, stems and inflorescences.

The protein resides in the plastid. Its subcellular location is the chloroplast. Its function is as follows. Probably mediates the hydrolysis of some nucleoside diphosphate derivatives. The polypeptide is Nudix hydrolase 21, chloroplastic (NUDT21) (Arabidopsis thaliana (Mouse-ear cress)).